The sequence spans 182 residues: Transcription termination/antitermination protein NusG (182 aa).

This sequence belongs to the NusG family.

Its function is as follows. Participates in transcription elongation, termination and antitermination. This is Transcription termination/antitermination protein NusG from Chlamydia muridarum (strain MoPn / Nigg).